Reading from the N-terminus, the 331-residue chain is Glyceraldehyde-3-phosphate dehydrogenase, cytosolic (331 aa).

NAD(+) contacts are provided by residues 11-12 (RI), Asp33, and Arg77. Residues 148 to 150 (SCT), Thr179, 208 to 209 (TG), and Arg231 contribute to the D-glyceraldehyde 3-phosphate site. Cys149 acts as the Nucleophile in catalysis. Residue Asn313 coordinates NAD(+).

The protein belongs to the glyceraldehyde-3-phosphate dehydrogenase family. Homotetramer.

It localises to the cytoplasm. The enzyme catalyses D-glyceraldehyde 3-phosphate + phosphate + NAD(+) = (2R)-3-phospho-glyceroyl phosphate + NADH + H(+). Its pathway is carbohydrate degradation; glycolysis; pyruvate from D-glyceraldehyde 3-phosphate: step 1/5. The polypeptide is Glyceraldehyde-3-phosphate dehydrogenase, cytosolic (GAPC) (Leishmania mexicana).